We begin with the raw amino-acid sequence, 209 residues long: Ubiquitin-conjugating enzyme E2 S (209 aa).

Positions 14–160 (QTIRQVMREL…ARMMTEIHAQ (147 aa)) constitute a UBC core domain. Cys-98 (glycyl thioester intermediate) is an active-site residue. The segment at 162-209 (AKCGAGAHGDDKDDDGPSTKKHAGLDKKLQDKKKEKLLKEKKRMLKRL) is disordered. The span at 169-199 (HGDDKDDDGPSTKKHAGLDKKLQDKKKEKLL) shows a compositional bias: basic and acidic residues. A compositionally biased stretch (basic residues) spans 200-209 (KEKKRMLKRL).

It belongs to the ubiquitin-conjugating enzyme family.

It catalyses the reaction S-ubiquitinyl-[E1 ubiquitin-activating enzyme]-L-cysteine + [E2 ubiquitin-conjugating enzyme]-L-cysteine = [E1 ubiquitin-activating enzyme]-L-cysteine + S-ubiquitinyl-[E2 ubiquitin-conjugating enzyme]-L-cysteine.. It participates in protein modification; protein ubiquitination. In terms of biological role, catalyzes the covalent attachment of ubiquitin to other proteins. Acts as an essential factor of the anaphase promoting complex/cyclosome (APC/C), a cell cycle-regulated ubiquitin ligase that controls progression through mitosis. Acts by specifically elongating polyubiquitin chains initiated by the E2 enzyme vih/UbcH10 on APC/C substrates, enhancing the degradation of APC/C substrates by the proteasome and promoting mitotic exit. The sequence is that of Ubiquitin-conjugating enzyme E2 S from Drosophila erecta (Fruit fly).